Reading from the N-terminus, the 373-residue chain is MHSESPIIRRQSTRIYVGDVPIGDGAPIAVQSMTNTLTTDVAATVAQIRALEKVGADIVRVSVPTMDAAEAFKLIKQQVNIPLVADIHFDYRIALKVAEYGVDCLRINPGNIGNEERIRSVVECARDYNIPIRIGINGGSLEKEIQLKYGEPTPDALVESAMRHVDILDRLNFDQFKVSVKASDVFLAVESYRRLAKQIKQPLHLGITEAGGARAGSVKSAVGLGMLLAEGIGDTLRISLAADPVEEIKVGFDILKSLRIRSRGINFIACPTCSRQEFDVIGTVNELEQRLEDITTPMDVSIIGCVVNGPGEAEVSHLGVAGSSRKSAFYEDGIRQKERFDNDNVIDQLETKIRAKAAMLDVNNRINVQEVEK.

4 residues coordinate [4Fe-4S] cluster: cysteine 270, cysteine 273, cysteine 305, and glutamate 312.

The protein belongs to the IspG family. Requires [4Fe-4S] cluster as cofactor.

The enzyme catalyses (2E)-4-hydroxy-3-methylbut-2-enyl diphosphate + oxidized [flavodoxin] + H2O + 2 H(+) = 2-C-methyl-D-erythritol 2,4-cyclic diphosphate + reduced [flavodoxin]. Its pathway is isoprenoid biosynthesis; isopentenyl diphosphate biosynthesis via DXP pathway; isopentenyl diphosphate from 1-deoxy-D-xylulose 5-phosphate: step 5/6. Its function is as follows. Converts 2C-methyl-D-erythritol 2,4-cyclodiphosphate (ME-2,4cPP) into 1-hydroxy-2-methyl-2-(E)-butenyl 4-diphosphate. The polypeptide is 4-hydroxy-3-methylbut-2-en-1-yl diphosphate synthase (flavodoxin) (Photobacterium profundum (strain SS9)).